A 485-amino-acid polypeptide reads, in one-letter code: Homeobox protein unplugged (485 aa).

Disordered stretches follow at residues 1 to 65, 114 to 157, and 212 to 325; these read MERP…QEQE, PAGH…DTRF, and GMAQ…RRTA. Acidic residues predominate over residues 54-64; the sequence is RDQEQEAEQEQ. Low complexity predominate over residues 114–128; the sequence is PAGHPAAQQPQAQAQ. 2 stretches are compositionally biased toward polar residues: residues 223 to 234 and 254 to 267; these read QAHSSPAKSGSH and DSCS…SPRN. Residues 284–293 are compositionally biased toward acidic residues; it reads DSEDCSDDEG. Positions 308 to 317 are enriched in low complexity; that stretch reads SQGNGSSSNS. Residues 319–378 constitute a DNA-binding region (homeobox); it reads SRRRRTAFTSEQLLELEREFHAKKYLSLTERSQIATSLKLSEVQVKIWFQNRRAKWKRVK.

As to expression, expressed in the neuroectodermal and mesectodermal cells at the ventral midline of stage 8 embryos, Subsequently, expression domains in the CNS widen and have their most anterior border in the posterior deutocerebrum. Oc/otd and unpg are mutual repressors at the interface of their brain-specific expression domains. Expression fades during germ band retraction and is then restricted to subset of cells by stage 14. Expressed in the founder cells of the cerebral branch within the first tracheal metamere. Outside the CNS, expression is seen in two clusters of ectodermal cells located laterally within the labial and first thoracic segments of stage 9 embryos. By stage 13, the expression is detected in a few cells close to the dorsal midline of the embryos.

The protein localises to the nucleus. In terms of biological role, plays a regulatory role in neural branching of the tracheae: segment-specific aspects of these neural branching patterns appear to be generated by homeotic regulation of expression. May have a role with oc/otd in the postembryonic development of the brain. This Drosophila melanogaster (Fruit fly) protein is Homeobox protein unplugged.